The sequence spans 425 residues: MKFGSALVAAVAAVAGVAAKDYGGVPGQPIQKSGKGAVFSGATNPQLDLQNPSNINGQPATDIGLVPNLKWSFSLSKTRMFHGGWIREQVISDLPASHDIAGAQVHLTKGGIRQMHWHRVAEWGYVYAGSILVFAVTEDGQYQIDKLTPGDIYYFPKGAAHSFQGIEDENEVLVAFDEGDFDKIGYLFPPYYSNINLQLSNAFNYRTTFQVAEWIAHTPQDVLAKNFNISTGGTFDKTKSNMLEIINSTTSTHNVTGPNGALMGNSSYTFHIRDAPEIQVPGGGGTIQIVDSKNFPISKTIACAIVRLKPGALRELHWHPTAEEWLYFHSGNARATVYVSGGLSRTFDFTAGDTGVFPDNAGHYIENVSEDEDLVYLELYKADRVADVSLSQWLALTPHDIAAAAINVPIDVIDKLKKDKQYIIQ.

Residues 1–19 (MKFGSALVAAVAAVAGVAA) form the signal peptide. In terms of domain architecture, Cupin type-1 1 spans 73 to 236 (FSLSKTRMFH…FNISTGGTFD (164 aa)). Histidine 116, histidine 118, glutamate 122, and histidine 161 together coordinate Mn(2+). N-linked (GlcNAc...) asparagine glycans are attached at residues asparagine 228, asparagine 247, asparagine 254, and asparagine 265. In terms of domain architecture, Cupin type-1 2 spans 270–414 (FHIRDAPEIQ…AINVPIDVID (145 aa)). Residues histidine 317, histidine 319, glutamate 324, and histidine 363 each contribute to the Mn(2+) site. An N-linked (GlcNAc...) asparagine glycan is attached at asparagine 367. Glutamate 378 (proton donor) is an active-site residue.

Mn(2+) serves as cofactor.

The protein resides in the secreted. It catalyses the reaction oxalate + H(+) = formate + CO2. In terms of biological role, converts oxalate to formate and CO(2) in an O(2)-dependent reaction. Can also catalyze minor side reactions: oxalate oxidation to produce H(2)O(2), and oxalate-dependent, H(2)O(2)-independent dye oxidations. The chain is Oxalate decarboxylase ARB_02208 from Arthroderma benhamiae (strain ATCC MYA-4681 / CBS 112371) (Trichophyton mentagrophytes).